A 57-amino-acid chain; its full sequence is MAKISITLKKSLIGRKKDHIATVNALGLKKIGRTVEHEDTPQIRGMIKKVDYLLEVK.

It belongs to the universal ribosomal protein uL30 family. As to quaternary structure, part of the 50S ribosomal subunit.

This Clostridium acetobutylicum (strain ATCC 824 / DSM 792 / JCM 1419 / IAM 19013 / LMG 5710 / NBRC 13948 / NRRL B-527 / VKM B-1787 / 2291 / W) protein is Large ribosomal subunit protein uL30.